The following is a 180-amino-acid chain: uncharacterized protein (180 aa).

This is an uncharacterized protein from Methanocaldococcus jannaschii (strain ATCC 43067 / DSM 2661 / JAL-1 / JCM 10045 / NBRC 100440) (Methanococcus jannaschii).